A 77-amino-acid chain; its full sequence is Acyl carrier protein (77 aa).

A Carrier domain is found at methionine 1–glutamine 76. Serine 36 carries the post-translational modification O-(pantetheine 4'-phosphoryl)serine.

It belongs to the acyl carrier protein (ACP) family. 4'-phosphopantetheine is transferred from CoA to a specific serine of apo-ACP by AcpS. This modification is essential for activity because fatty acids are bound in thioester linkage to the sulfhydryl of the prosthetic group.

The protein resides in the cytoplasm. It participates in lipid metabolism; fatty acid biosynthesis. Functionally, carrier of the growing fatty acid chain in fatty acid biosynthesis. The sequence is that of Acyl carrier protein from Chlamydia caviae (strain ATCC VR-813 / DSM 19441 / 03DC25 / GPIC) (Chlamydophila caviae).